We begin with the raw amino-acid sequence, 534 residues long: Cytochrome P450 78A9 (534 aa).

Residues 26-46 (LALSLLVASLASLALSLFFWS) traverse the membrane as a helical segment. A heme-binding site is contributed by Cys474.

This sequence belongs to the cytochrome P450 family. It depends on heme as a cofactor. In terms of tissue distribution, expressed in the funiculus of developing ovules.

Its subcellular location is the membrane. Functionally, plays a role in seed and fruit development. Functions probably in association with CYP78A6 in the regulation of seed growth. This is Cytochrome P450 78A9 (CYP78A9) from Arabidopsis thaliana (Mouse-ear cress).